Consider the following 423-residue polypeptide: Ferrochelatase, mitochondrial (423 aa).

The transit peptide at 1 to 29 directs the protein to the mitochondrion; sequence MISRKIISTINSKTFYNKSLSYCTVNNNK. C173 provides a ligand contact to [2Fe-2S] cluster. Catalysis depends on residues H207 and D380. C401, C404, and C411 together coordinate [2Fe-2S] cluster.

The protein belongs to the ferrochelatase family. As to quaternary structure, monomer. The cofactor is [2Fe-2S] cluster.

The protein localises to the mitochondrion inner membrane. It catalyses the reaction heme b + 2 H(+) = protoporphyrin IX + Fe(2+). Its pathway is porphyrin-containing compound metabolism; protoheme biosynthesis; protoheme from protoporphyrin-IX: step 1/1. Its function is as follows. Catalyzes the ferrous insertion into protoporphyrin IX. The sequence is that of Ferrochelatase, mitochondrial (hemH) from Dictyostelium discoideum (Social amoeba).